The following is a 1755-amino-acid chain: Transposon Ty1-DR6 Gag-Pol polyprotein (1755 aa).

Polar residues-rich tracts occupy residues 1 to 23, 48 to 60, and 127 to 152; these read MESQ…SVTS, TKAN…TPAS, and QSQF…GNTF. 3 disordered regions span residues 1–93, 126–174, and 352–421; these read MESQ…MMTQ, PQSQ…PPPM, and GSRN…SKST. The segment covering 153-165 has biased composition (low complexity); it reads TDSSSADSDMTST. Residues 299-401 form an RNA-binding region; the sequence is NNGIHINNKV…NSKSKTARAH (103 aa). The segment covering 402–418 has biased composition (low complexity); sequence NVSTSNNSPSTDNDSIS. S416 bears the Phosphoserine mark. D461 serves as the catalytic For protease activity; shared with dimeric partner. Positions 583 to 640 are integrase-type zinc finger-like; that stretch reads NVHTSESTRKYPYPFIHRMLAHANAQTIRYSLKNNTITYFNESDVDWSSAIDYQCPDC. Positions 660-835 constitute an Integrase catalytic domain; the sequence is NSYEPFQYLH…AGLDISTLLP (176 aa). Mg(2+) contacts are provided by D671 and D736. Disordered stretches follow at residues 956-1087, 1092-1111, and 1130-1187; these read SKAV…ETEK, RSPS…NIVP, and DLPL…DNET. Positions 960 to 969 are enriched in low complexity; sequence SPTDSTPPST. Residues 1005–1015 are compositionally biased toward polar residues; the sequence is STPQISNIEST. A compositionally biased stretch (basic and acidic residues) spans 1038 to 1053; the sequence is ESSHASKSKDFRHSDS. 2 stretches are compositionally biased toward polar residues: residues 1054–1082 and 1101–1111; these read YSEN…QISD and PENNSSHNIVP. A Bipartite nuclear localization signal motif is present at residues 1178 to 1212; sequence KKRSLEDNETEIKVSRDTWNTKNMRSLEPPRSKKR. The Reverse transcriptase Ty1/copia-type domain occupies 1338–1476; that stretch reads NNYYITQLDI…DILGLEIKYQ (139 aa). Residues D1346, D1427, D1428, D1610, E1652, and D1685 each contribute to the Mg(2+) site. The RNase H Ty1/copia-type domain occupies 1610-1752; the sequence is DASYGNQPYY…IKTFKLLTNK (143 aa).

In terms of assembly, the capsid protein forms a homotrimer, from which the VLPs are assembled. The protease is a homodimer, whose active site consists of two apposed aspartic acid residues. In terms of processing, initially, virus-like particles (VLPs) are composed of the structural unprocessed proteins Gag and Gag-Pol, and also contain the host initiator methionine tRNA (tRNA(i)-Met) which serves as a primer for minus-strand DNA synthesis, and a dimer of genomic Ty RNA. Processing of the polyproteins occurs within the particle and proceeds by an ordered pathway, called maturation. First, the protease (PR) is released by autocatalytic cleavage of the Gag-Pol polyprotein yielding capsid protein p45 and a Pol-p154 precursor protein. This cleavage is a prerequisite for subsequent processing of Pol-p154 at the remaining sites to release the mature structural and catalytic proteins. Maturation takes place prior to the RT reaction and is required to produce transposition-competent VLPs.

The protein resides in the cytoplasm. It is found in the nucleus. It carries out the reaction DNA(n) + a 2'-deoxyribonucleoside 5'-triphosphate = DNA(n+1) + diphosphate. The enzyme catalyses Endonucleolytic cleavage to 5'-phosphomonoester.. Capsid protein (CA) is the structural component of the virus-like particle (VLP), forming the shell that encapsulates the retrotransposons dimeric RNA genome. The particles are assembled from trimer-clustered units and there are holes in the capsid shells that allow for the diffusion of macromolecules. CA also has nucleocapsid-like chaperone activity, promoting primer tRNA(i)-Met annealing to the multipartite primer-binding site (PBS), dimerization of Ty1 RNA and initiation of reverse transcription. Functionally, the aspartyl protease (PR) mediates the proteolytic cleavages of the Gag and Gag-Pol polyproteins after assembly of the VLP. In terms of biological role, reverse transcriptase/ribonuclease H (RT) is a multifunctional enzyme that catalyzes the conversion of the retro-elements RNA genome into dsDNA within the VLP. The enzyme displays a DNA polymerase activity that can copy either DNA or RNA templates, and a ribonuclease H (RNase H) activity that cleaves the RNA strand of RNA-DNA heteroduplexes during plus-strand synthesis and hydrolyzes RNA primers. The conversion leads to a linear dsDNA copy of the retrotransposon that includes long terminal repeats (LTRs) at both ends. Its function is as follows. Integrase (IN) targets the VLP to the nucleus, where a subparticle preintegration complex (PIC) containing at least integrase and the newly synthesized dsDNA copy of the retrotransposon must transit the nuclear membrane. Once in the nucleus, integrase performs the integration of the dsDNA into the host genome. This is Transposon Ty1-DR6 Gag-Pol polyprotein (TY1B-DR6) from Saccharomyces cerevisiae (strain ATCC 204508 / S288c) (Baker's yeast).